Here is a 45-residue protein sequence, read N- to C-terminus: Large ribosomal subunit protein bL34 (45 aa).

A disordered region spans residues 1-27; that stretch reads MTKRTLGGTSRKRKRVSGFRVRMRTHT. A compositionally biased stretch (basic residues) spans 10–27; that stretch reads SRKRKRVSGFRVRMRTHT.

This sequence belongs to the bacterial ribosomal protein bL34 family.

The sequence is that of Large ribosomal subunit protein bL34 from Prochlorococcus marinus (strain MIT 9211).